The sequence spans 405 residues: L-rhamnonate dehydratase (405 aa).

2 residues coordinate substrate: His-33 and Arg-59. 3 residues coordinate Mg(2+): Asp-226, Glu-252, and Glu-280. His-329 serves as the catalytic Proton acceptor. Glu-349 contacts substrate.

This sequence belongs to the mandelate racemase/muconate lactonizing enzyme family. RhamD subfamily. As to quaternary structure, homooctamer; tetramer of dimers. The cofactor is Mg(2+).

It carries out the reaction L-rhamnonate = 2-dehydro-3-deoxy-L-rhamnonate + H2O. Functionally, catalyzes the dehydration of L-rhamnonate to 2-keto-3-deoxy-L-rhamnonate (KDR). Can also dehydrate L-lyxonate and L-mannonate, although less efficiently, but not 2-keto-4-hydroxyheptane-1,7-dioate. This Salmonella typhimurium (strain LT2 / SGSC1412 / ATCC 700720) protein is L-rhamnonate dehydratase (rhmD).